A 350-amino-acid chain; its full sequence is Galactokinase (350 aa).

Position 14–17 (14–17) interacts with substrate; sequence EHTD. ATP-binding positions include serine 46 and 96-102; that span reads GAGLSSS. Positions 102 and 134 each coordinate Mg(2+). The active-site Proton acceptor is the aspartate 146. Tyrosine 196 serves as a coordination point for substrate.

Belongs to the GHMP kinase family. GalK subfamily.

The protein localises to the cytoplasm. It carries out the reaction alpha-D-galactose + ATP = alpha-D-galactose 1-phosphate + ADP + H(+). The protein operates within carbohydrate metabolism; galactose metabolism. Functionally, catalyzes the transfer of the gamma-phosphate of ATP to D-galactose to form alpha-D-galactose-1-phosphate (Gal-1-P). The protein is Galactokinase of Thermotoga petrophila (strain ATCC BAA-488 / DSM 13995 / JCM 10881 / RKU-1).